A 302-amino-acid chain; its full sequence is 4-hydroxy-tetrahydrodipicolinate synthase (302 aa).

Pyruvate is bound at residue T55. The active-site Proton donor/acceptor is Y144. The active-site Schiff-base intermediate with substrate is the K172. V214 provides a ligand contact to pyruvate.

Belongs to the DapA family. As to quaternary structure, homotetramer; dimer of dimers.

The protein localises to the cytoplasm. It catalyses the reaction L-aspartate 4-semialdehyde + pyruvate = (2S,4S)-4-hydroxy-2,3,4,5-tetrahydrodipicolinate + H2O + H(+). The protein operates within amino-acid biosynthesis; L-lysine biosynthesis via DAP pathway; (S)-tetrahydrodipicolinate from L-aspartate: step 3/4. In terms of biological role, catalyzes the condensation of (S)-aspartate-beta-semialdehyde [(S)-ASA] and pyruvate to 4-hydroxy-tetrahydrodipicolinate (HTPA). In Prochlorococcus marinus (strain SARG / CCMP1375 / SS120), this protein is 4-hydroxy-tetrahydrodipicolinate synthase.